The chain runs to 963 residues: Kinesin-1 heavy chain (963 aa).

An N-acetylalanine modification is found at alanine 2. In terms of domain architecture, Kinesin motor spans asparagine 8 to isoleucine 325. Glycine 85–threonine 92 contributes to the ATP binding site. Residue lysine 213 forms a Glycyl lysine isopeptide (Lys-Gly) (interchain with G-Cter in SUMO2) linkage. The stretch at cysteine 330–arginine 913 forms a coiled coil. The disordered stretch occupies residues serine 908 to alanine 963. The interval glycine 915–alanine 963 is globular. Phosphoserine occurs at positions 933 and 945. Arginine 956 carries the omega-N-methylarginine modification.

This sequence belongs to the TRAFAC class myosin-kinesin ATPase superfamily. Kinesin family. Kinesin subfamily. In terms of assembly, oligomer composed of two heavy chains and two light chains. Interacts with GRIP1 and PPP1R42. Interacts with SYBU. Interacts with JAKMIP1. Interacts with PLEKHM2. Interacts with ECPAS. Interacts with ZFYVE27. Found in a complex with OGT, RHOT1, RHOT2 and TRAK1. Interacts with APP (via cytoplasmic domain). Expressed in the brain (at protein level). Expressed in the brain, liver, kidney, spleen, heart, lung and sciatic nerve.

It is found in the cytoplasm. Its subcellular location is the cytoskeleton. The protein localises to the cytolytic granule membrane. It localises to the lysosome membrane. In terms of biological role, microtubule-dependent motor required for normal distribution of mitochondria and lysosomes. Can induce formation of neurite-like membrane protrusions in non-neuronal cells in a ZFYVE27-dependent manner. Regulates centrosome and nuclear positioning during mitotic entry. During the G2 phase of the cell cycle in a BICD2-dependent manner, antagonizes dynein function and drives the separation of nuclei and centrosomes. Required for anterograde axonal transportation of MAPK8IP3/JIP3 which is essential for MAPK8IP3/JIP3 function in axon elongation. Through binding with PLEKHM2 and ARL8B, directs lysosome movement toward microtubule plus ends. Involved in NK cell-mediated cytotoxicity. Drives the polarization of cytolytic granules and microtubule-organizing centers (MTOCs) toward the immune synapse between effector NK lymphocytes and target cells. This chain is Kinesin-1 heavy chain, found in Rattus norvegicus (Rat).